The primary structure comprises 664 residues: Tripartite terminase subunit 1 (664 aa).

Residues 205–233 form a C3H1-type zinc finger; the sequence is CHVCFEELCVTANQGATASRRLAGKICDH. 2 disordered regions span residues 273–295 and 440–466; these read SKMT…AQER and HAAE…GGPE. The span at 281-292 shows a compositional bias: low complexity; sequence GGPAEAPGPAAA.

The protein belongs to the herpesviridae TRM1 protein family. In terms of assembly, associates with TRM2 and TRM3 to form the tripartite terminase complex. Interacts with portal protein.

The protein resides in the host nucleus. Functionally, component of the molecular motor that translocates viral genomic DNA in empty capsid during DNA packaging. Forms a tripartite terminase complex together with TRM2 and TRM3 in the host cytoplasm. Once the complex reaches the host nucleus, it interacts with the capsid portal vertex. This portal forms a ring in which genomic DNA is translocated into the capsid. TRM1 carries an endonuclease activity that plays an important role for the cleavage of concatemeric viral DNA into unit length genomes. The chain is Tripartite terminase subunit 1 from Bos taurus (Bovine).